We begin with the raw amino-acid sequence, 176 residues long: Secreted LysM effector ELP2 (176 aa).

The signal sequence occupies residues 1 to 18; that stretch reads MQFSIFTVLAAAASFAVA. Over residues 31–45 the composition is skewed to low complexity; that stretch reads TSAAANPSPTTSGAA. The segment at 31–50 is disordered; the sequence is TSAAANPSPTTSGAANPSPT. The LysM 1 domain occupies 58–102; the sequence is HKTTVKAGQTLTTIAERFHSGICDIAWQNKLENPNVIFVGQVLLV. N-linked (GlcNAc...) asparagine glycosylation occurs at Asn111. Residues 129–173 enclose the LysM 2 domain; sequence ATYTIKSGDTFFAVAQSLGITTDSLTGANPGVVPENLQIDQVINV.

Belongs to the secreted LysM effector family. In terms of assembly, forms homodimers in a chitin-independent manner through interactions at the N-termini of EPL2 monomers. Homodimers are further polymerized in a chitin-dependent manner.

The protein resides in the secreted. Secreted effector that enables the plant pathogenic fungus to manipulate host defenses for successful infection. Binds chitin oligomers and polymer with high affinity and plays a dual role, not only in the suppression of chitin-triggered immune responses, but also in appressorium function. Does not protect fungal hyphae against plant chitinases but suppresses chitin-triggered plant immune responses. Chitin-induced polymerization of homodimers forms a contiguous ELP2 highly oligomeric super-complexe that may precipitate at infection sites to eliminate chitin oligomers, and thus suppress the activation of chitin-induced plant immunity. In Colletotrichum higginsianum (strain IMI 349063) (Crucifer anthracnose fungus), this protein is Secreted LysM effector ELP2.